The chain runs to 311 residues: Acetyl-coenzyme A carboxylase carboxyl transferase subunit beta (311 aa).

In terms of domain architecture, CoA carboxyltransferase N-terminal spans 32-299 (LWVKCPVSEE…TSMPAALTPP (268 aa)). The tract at residues 291–311 (SMPAALTPPAPDHVVADGGSH) is disordered.

This sequence belongs to the AccD/PCCB family. Acetyl-CoA carboxylase is a heterohexamer composed of biotin carboxyl carrier protein (AccB), biotin carboxylase (AccC) and two subunits each of ACCase subunit alpha (AccA) and ACCase subunit beta (AccD).

It localises to the cytoplasm. It carries out the reaction N(6)-carboxybiotinyl-L-lysyl-[protein] + acetyl-CoA = N(6)-biotinyl-L-lysyl-[protein] + malonyl-CoA. It participates in lipid metabolism; malonyl-CoA biosynthesis; malonyl-CoA from acetyl-CoA: step 1/1. Functionally, component of the acetyl coenzyme A carboxylase (ACC) complex. Biotin carboxylase (BC) catalyzes the carboxylation of biotin on its carrier protein (BCCP) and then the CO(2) group is transferred by the transcarboxylase to acetyl-CoA to form malonyl-CoA. The sequence is that of Acetyl-coenzyme A carboxylase carboxyl transferase subunit beta from Maricaulis maris (strain MCS10) (Caulobacter maris).